The primary structure comprises 352 residues: Methylthioribose-1-phosphate isomerase (352 aa).

Substrate is bound by residues 55–57, R98, and Q201; that span reads RGA. The active-site Proton donor is D242. 252 to 253 serves as a coordination point for substrate; sequence NK.

The protein belongs to the eIF-2B alpha/beta/delta subunits family. MtnA subfamily.

The enzyme catalyses 5-(methylsulfanyl)-alpha-D-ribose 1-phosphate = 5-(methylsulfanyl)-D-ribulose 1-phosphate. It participates in amino-acid biosynthesis; L-methionine biosynthesis via salvage pathway; L-methionine from S-methyl-5-thio-alpha-D-ribose 1-phosphate: step 1/6. In terms of biological role, catalyzes the interconversion of methylthioribose-1-phosphate (MTR-1-P) into methylthioribulose-1-phosphate (MTRu-1-P). The sequence is that of Methylthioribose-1-phosphate isomerase from Methylococcus capsulatus (strain ATCC 33009 / NCIMB 11132 / Bath).